A 623-amino-acid polypeptide reads, in one-letter code: NAD-dependent malic enzyme, mitochondrial (623 aa).

Residues 1–31 (MLVLCSRSRLTSSLIRRLKDQIANVSNHRSF) constitute a mitochondrion transit peptide. Fumarate-binding residues include Arg-88 and Arg-122. Ser-143 functions as the Proton donor in the catalytic mechanism. (S)-malate is bound at residue Arg-196. Arg-196 contacts NAD(+). Lys-214 serves as the catalytic Proton acceptor. Residues Glu-285 and Asp-286 each coordinate a divalent metal cation. Asn-289 contacts NAD(+). Asp-309 serves as a coordination point for a divalent metal cation. Ala-345 contributes to the NAD(+) binding site. Positions 464 and 509 each coordinate (S)-malate.

It belongs to the malic enzymes family. In terms of assembly, heterodimer of two related subunits. Mg(2+) is required as a cofactor. The cofactor is Mn(2+).

Its subcellular location is the mitochondrion matrix. The enzyme catalyses (S)-malate + NAD(+) = pyruvate + CO2 + NADH. The protein operates within photosynthesis; C4 acid pathway. The polypeptide is NAD-dependent malic enzyme, mitochondrial (Amaranthus hypochondriacus (Prince-of-Wales feather)).